The primary structure comprises 188 residues: Elongation factor P (188 aa).

The protein belongs to the elongation factor P family.

It localises to the cytoplasm. It participates in protein biosynthesis; polypeptide chain elongation. In terms of biological role, involved in peptide bond synthesis. Stimulates efficient translation and peptide-bond synthesis on native or reconstituted 70S ribosomes in vitro. Probably functions indirectly by altering the affinity of the ribosome for aminoacyl-tRNA, thus increasing their reactivity as acceptors for peptidyl transferase. The protein is Elongation factor P of Flavobacterium johnsoniae (strain ATCC 17061 / DSM 2064 / JCM 8514 / BCRC 14874 / CCUG 350202 / NBRC 14942 / NCIMB 11054 / UW101) (Cytophaga johnsonae).